The chain runs to 480 residues: NADH-quinone oxidoreductase subunit N (480 aa).

The next 13 membrane-spanning stretches (helical) occupy residues 13 to 33, 41 to 61, 81 to 101, 107 to 127, 132 to 152, 167 to 187, 212 to 232, 245 to 265, 276 to 296, 314 to 334, 373 to 393, 413 to 433, and 454 to 474; these read ISPM…QFLI, PLWV…YHTT, VWLS…APPF, TLFP…MFLT, LIVI…MIGM, FLLG…LYGG, LGLG…PFHS, ITGF…IILF, VWKY…NIVA, AGYI…YYLF, ALAL…IGFW, LLFG…KITI, and PTLG…WIFF.

This sequence belongs to the complex I subunit 2 family. In terms of assembly, NDH-1 is composed of 14 different subunits. Subunits NuoA, H, J, K, L, M, N constitute the membrane sector of the complex.

It localises to the cell inner membrane. The enzyme catalyses a quinone + NADH + 5 H(+)(in) = a quinol + NAD(+) + 4 H(+)(out). Its function is as follows. NDH-1 shuttles electrons from NADH, via FMN and iron-sulfur (Fe-S) centers, to quinones in the respiratory chain. The immediate electron acceptor for the enzyme in this species is believed to be ubiquinone. Couples the redox reaction to proton translocation (for every two electrons transferred, four hydrogen ions are translocated across the cytoplasmic membrane), and thus conserves the redox energy in a proton gradient. This chain is NADH-quinone oxidoreductase subunit N, found in Leptospira biflexa serovar Patoc (strain Patoc 1 / Ames).